Consider the following 186-residue polypeptide: Probable peptidoglycan L,D-endopeptidase MepK (186 aa).

Positions methionine 1–alanine 30 are cleaved as a signal peptide. Positions 134, 141, and 174 each coordinate Zn(2+).

This sequence belongs to the peptidase M15 family. Zn(2+) serves as cofactor.

It participates in cell wall biogenesis; cell wall polysaccharide biosynthesis. Its function is as follows. L,D-endopeptidase that cleaves meso-diaminopimelic acid (mDAP)-mDAP cross-links in peptidoglycan. It works in conjunction with other elongation-specific D,D-endopeptidases to make space for efficient incorporation of nascent peptidoglycan strands into the sacculus and thus enable cell wall expansion. The sequence is that of Probable peptidoglycan L,D-endopeptidase MepK from Haemophilus influenzae (strain ATCC 51907 / DSM 11121 / KW20 / Rd).